The following is a 358-amino-acid chain: 3-dehydroquinate synthase (358 aa).

NAD(+) is bound by residues 102 to 106 (GVVGD), 126 to 127 (TT), Lys139, and Lys148. Zn(2+) contacts are provided by Glu181, His244, and His260.

The protein belongs to the sugar phosphate cyclases superfamily. Dehydroquinate synthase family. Requires Co(2+) as cofactor. It depends on Zn(2+) as a cofactor. NAD(+) serves as cofactor.

Its subcellular location is the cytoplasm. It carries out the reaction 7-phospho-2-dehydro-3-deoxy-D-arabino-heptonate = 3-dehydroquinate + phosphate. Its pathway is metabolic intermediate biosynthesis; chorismate biosynthesis; chorismate from D-erythrose 4-phosphate and phosphoenolpyruvate: step 2/7. In terms of biological role, catalyzes the conversion of 3-deoxy-D-arabino-heptulosonate 7-phosphate (DAHP) to dehydroquinate (DHQ). The protein is 3-dehydroquinate synthase of Symbiobacterium thermophilum (strain DSM 24528 / JCM 14929 / IAM 14863 / T).